The chain runs to 271 residues: MFSIQQPLLVFSDLDGTLLDSHSYDWQPAAPWLSRLHEANIPVILCSSKTSAEMLYLQKMLGLQGLPLIAENGAVIQLAEQWQDIDGFPRIISGISHGEICQVLNKLREKEHFKFTTFDDVDDATIAEWTGLSRSQAALTQLHEASVTLIWRDSDEHMAQFIARLNELGLQFMQGARFWHVLDASAGKDQAANWIIATYQQLSGRRPTTLGLGDGPNDAPLLEVMDYAVIVKGLNREGVHLHDEDPARVWRTQREGPEGWREGLDHFFSAR.

Aspartate 13 serves as the catalytic Nucleophile. Aspartate 13, aspartate 15, and aspartate 214 together coordinate Mg(2+).

It belongs to the HAD-like hydrolase superfamily. MPGP family. The cofactor is Mg(2+).

It localises to the cytoplasm. It catalyses the reaction 2-O-(alpha-D-mannosyl)-3-phosphoglycerate + H2O = (2R)-2-O-(alpha-D-mannosyl)-glycerate + phosphate. In Escherichia coli O6:H1 (strain CFT073 / ATCC 700928 / UPEC), this protein is Mannosyl-3-phosphoglycerate phosphatase (yedP).